The following is a 168-amino-acid chain: Lipoprotein signal peptidase (168 aa).

Transmembrane regions (helical) follow at residues 5–25, 37–57, 59–79, and 85–105; these read SPYA…KHLV, LVPF…SMFS, FGDT…LYLA, and GHVI…GNLI. Residues Asp115 and Asp133 contribute to the active site. A helical membrane pass occupies residues 125–145; the sequence is SFAIFNLADAFISVGAALVVF.

The protein belongs to the peptidase A8 family.

It localises to the cell inner membrane. The catalysed reaction is Release of signal peptides from bacterial membrane prolipoproteins. Hydrolyzes -Xaa-Yaa-Zaa-|-(S,diacylglyceryl)Cys-, in which Xaa is hydrophobic (preferably Leu), and Yaa (Ala or Ser) and Zaa (Gly or Ala) have small, neutral side chains.. The protein operates within protein modification; lipoprotein biosynthesis (signal peptide cleavage). In terms of biological role, this protein specifically catalyzes the removal of signal peptides from prolipoproteins. This is Lipoprotein signal peptidase from Mesorhizobium japonicum (strain LMG 29417 / CECT 9101 / MAFF 303099) (Mesorhizobium loti (strain MAFF 303099)).